The chain runs to 452 residues: Pup--protein ligase (452 aa).

E9 contributes to the Mg(2+) binding site. R53 is an ATP binding site. Y55 lines the Mg(2+) pocket. D57 (proton acceptor) is an active-site residue. Mg(2+) is bound at residue E63. T66 and W419 together coordinate ATP.

It belongs to the Pup ligase/Pup deamidase family. Pup-conjugating enzyme subfamily.

It catalyses the reaction ATP + [prokaryotic ubiquitin-like protein]-L-glutamate + [protein]-L-lysine = ADP + phosphate + N(6)-([prokaryotic ubiquitin-like protein]-gamma-L-glutamyl)-[protein]-L-lysine.. The protein operates within protein degradation; proteasomal Pup-dependent pathway. It participates in protein modification; protein pupylation. Its function is as follows. Catalyzes the covalent attachment of the prokaryotic ubiquitin-like protein modifier Pup to the proteasomal substrate proteins, thereby targeting them for proteasomal degradation. This tagging system is termed pupylation. The ligation reaction involves the side-chain carboxylate of the C-terminal glutamate of Pup and the side-chain amino group of a substrate lysine. This is Pup--protein ligase from Salinispora arenicola (strain CNS-205).